The primary structure comprises 209 residues: Transcription antitermination protein NusB (209 aa).

The protein belongs to the NusB family.

Its function is as follows. Involved in transcription antitermination. Required for transcription of ribosomal RNA (rRNA) genes. Binds specifically to the boxA antiterminator sequence of the ribosomal RNA (rrn) operons. This Crocosphaera subtropica (strain ATCC 51142 / BH68) (Cyanothece sp. (strain ATCC 51142)) protein is Transcription antitermination protein NusB.